The chain runs to 151 residues: Hemoglobin-2 (151 aa).

Threonine 2 bears the N-acetylthreonine mark. The Globin domain occupies 3–148 (TLTNPQKAAI…ICKTLGDYMK (146 aa)). Heme b is bound at residue histidine 97.

Belongs to the globin family. As to quaternary structure, homotetramer.

Its subcellular location is the cytoplasm. The chain is Hemoglobin-2 from Phacoides pectinatus (Thick lucine).